We begin with the raw amino-acid sequence, 283 residues long: Putative S-adenosyl-L-methionine-dependent methyltransferase SAV_474/SAV474 (283 aa).

Residues Asp-121 and 150-151 (DL) contribute to the S-adenosyl-L-methionine site. The disordered stretch occupies residues 258 to 283 (AAYGRPISTPPQREERPGGLISAVRR).

This sequence belongs to the UPF0677 family.

Functionally, exhibits S-adenosyl-L-methionine-dependent methyltransferase activity. The chain is Putative S-adenosyl-L-methionine-dependent methyltransferase SAV_474/SAV474 from Streptomyces avermitilis (strain ATCC 31267 / DSM 46492 / JCM 5070 / NBRC 14893 / NCIMB 12804 / NRRL 8165 / MA-4680).